The sequence spans 163 residues: CDP-archaeol synthase (163 aa).

Transmembrane regions (helical) follow at residues Leu4–Ile24, Leu52–Ile72, Ile75–Ile95, Ala107–Asn127, and Val128–Phe148.

This sequence belongs to the CDP-archaeol synthase family. The cofactor is Mg(2+).

It localises to the cell membrane. The catalysed reaction is 2,3-bis-O-(geranylgeranyl)-sn-glycerol 1-phosphate + CTP + H(+) = CDP-2,3-bis-O-(geranylgeranyl)-sn-glycerol + diphosphate. It functions in the pathway membrane lipid metabolism; glycerophospholipid metabolism. In terms of biological role, catalyzes the formation of CDP-2,3-bis-(O-geranylgeranyl)-sn-glycerol (CDP-archaeol) from 2,3-bis-(O-geranylgeranyl)-sn-glycerol 1-phosphate (DGGGP) and CTP. This reaction is the third ether-bond-formation step in the biosynthesis of archaeal membrane lipids. This is CDP-archaeol synthase from Sulfolobus acidocaldarius (strain ATCC 33909 / DSM 639 / JCM 8929 / NBRC 15157 / NCIMB 11770).